A 553-amino-acid chain; its full sequence is Putative transport protein YidE (553 aa).

5 helical membrane-spanning segments follow: residues 4–24 (IALT…IGNV), 28–48 (GIGL…HFVS), 65–85 (FGLI…FFAS), 95–115 (LFAV…HKLF), and 158–178 (MSYA…MWML). 2 RCK C-terminal domains span residues 191-276 (QQHE…VIGQ) and 279-361 (DTSL…VLGN). 5 consecutive transmembrane segments (helical) span residues 371 to 391 (MLPV…PVFV), 394 to 414 (FPAA…LILG), 439 to 459 (IVLF…NTLV), 464 to 484 (LSWI…VGIL), and 533 to 553 (LVMF…WSIG).

Belongs to the AAE transporter (TC 2.A.81) family. YidE subfamily.

The protein localises to the cell membrane. This chain is Putative transport protein YidE, found in Shigella dysenteriae serotype 1 (strain Sd197).